The sequence spans 779 residues: Ribosome-releasing factor 2, mitochondrial (779 aa).

In terms of domain architecture, tr-type G spans 68 to 353; it reads AKIRNIGIMA…AVTTYLPSPE (286 aa). GTP-binding positions include 77 to 84, 141 to 145, and 195 to 198; these read AHIDAGKT, DTPGH, and NKMD.

This sequence belongs to the TRAFAC class translation factor GTPase superfamily. Classic translation factor GTPase family. EF-G/EF-2 subfamily.

Its subcellular location is the mitochondrion. The enzyme catalyses GTP + H2O = GDP + phosphate + H(+). Its function is as follows. Mitochondrial GTPase that mediates the disassembly of ribosomes from messenger RNA at the termination of mitochondrial protein biosynthesis. Acts in collaboration with MRRF. GTP hydrolysis follows the ribosome disassembly and probably occurs on the ribosome large subunit. Not involved in the GTP-dependent ribosomal translocation step during translation elongation. The chain is Ribosome-releasing factor 2, mitochondrial (Gfm2) from Rattus norvegicus (Rat).